The chain runs to 370 residues: D-aspartate oxidase (370 aa).

An N-terminal signal peptide occupies residues 1–18 (MPPRIIILGAGIIGLSTA). I13, E42, A63, S64, and G68 together coordinate FAD. N-linked (GlcNAc...) asparagine glycosylation is present at N207. FAD is bound by residues R308, G338, and Y339.

It belongs to the DAMOX/DASOX family. As to quaternary structure, monomer. FAD is required as a cofactor.

It carries out the reaction D-aspartate + O2 + H2O = oxaloacetate + H2O2 + NH4(+). The catalysed reaction is D-glutamate + O2 + H2O = H2O2 + 2-oxoglutarate + NH4(+). Functionally, selectively catalyzes the oxidative deamination of acidic amino acids. Protects the organism from the toxicity of D-amino acids. Enables the organism to utilize D-amino acids as a source of nutrients. The sequence is that of D-aspartate oxidase from Talaromyces thermophilus.